The sequence spans 801 residues: Mitochondrial intermediate peptidase (801 aa).

The N-terminal 41 residues, 1–41, are a transit peptide targeting the mitochondrion; the sequence is MKPQLLTPLRRRPWTCRQCLQRLQRLQQQTRRSFETAASPA. The tract at residues 31-54 is disordered; the sequence is RRSFETAASPAPGHTQVDYIPADA. His565 is a Zn(2+) binding site. Glu566 is an active-site residue. Residues His569 and His572 each contribute to the Zn(2+) site.

It belongs to the peptidase M3 family. Zn(2+) serves as cofactor.

It localises to the mitochondrion matrix. The catalysed reaction is Release of an N-terminal octapeptide as second stage of processing of some proteins imported into the mitochondrion.. Cleaves proteins, imported into the mitochondrion, to their mature size. While most mitochondrial precursor proteins are processed to the mature form in one step by mitochondrial processing peptidase (MPP), the sequential cleavage by MIP of an octapeptide after initial processing by MPP is a required step for a subgroup of nuclear-encoded precursor proteins destined for the matrix or the inner membrane. The sequence is that of Mitochondrial intermediate peptidase (oct1) from Aspergillus clavatus (strain ATCC 1007 / CBS 513.65 / DSM 816 / NCTC 3887 / NRRL 1 / QM 1276 / 107).